A 535-amino-acid polypeptide reads, in one-letter code: MAKILTIVMLVFVSMAGWMFGADTGSIGGITNMRDFQSRYADRYDPVTDTYSYSSARQGLLVGMVNTGTTVGCLLSSPLGDRFGKRKCIMGWTLVYITGVIVQLTTIPSWVQMMVAKIWTGLGIGALSVIAPGYQSESSPPHIRGAIVTTYQLFITLGIFIAACINMGTHKYTTHPEAQWRVPIGINLLWGILMFFGMLFLPESPRYLAVKGRNEECMKILTRNAGLPADHPIMQKEYNAIQADVEAELAGGPCSWPQIFSNEIRYRTLLGMGVMAFQQLTGNNYFFYYGTQVFRGTGLNSPFLAALILDAVNFGCTFGAIFVLEYFGRRGPLIVGGVWQSICFFIYASVGDRALTRPNGTSNHRAGAVMIVFSCLFIFSFAQTWAPAAYVIVGESYPIRYRSKCAAVATASNWFWNFMISFFTPFISNSIGFKYGYVFAACNLCAAIIIFLFAKETKGLTLEEINQLYLSNIKPWNTGAYQRDREDIKQSDSEKERGPTSKLHEYVEHAPNSYASTHSTESENYPQQVTNPVGL.

Topologically, residues 1 to 9 are cytoplasmic; that stretch reads MAKILTIVM. A helical transmembrane segment spans residues 10 to 30; sequence LVFVSMAGWMFGADTGSIGGI. Topologically, residues 31–58 are extracellular; it reads TNMRDFQSRYADRYDPVTDTYSYSSARQ. The helical transmembrane segment at 59 to 79 threads the bilayer; the sequence is GLLVGMVNTGTTVGCLLSSPL. At 80–87 the chain is on the cytoplasmic side; the sequence is GDRFGKRK. Residues 88-108 form a helical membrane-spanning segment; that stretch reads CIMGWTLVYITGVIVQLTTIP. Residues 109–112 are Extracellular-facing; sequence SWVQ. A helical membrane pass occupies residues 113 to 133; that stretch reads MMVAKIWTGLGIGALSVIAPG. Residues 134-144 lie on the Cytoplasmic side of the membrane; sequence YQSESSPPHIR. Residues 145 to 165 form a helical membrane-spanning segment; it reads GAIVTTYQLFITLGIFIAACI. The Extracellular portion of the chain corresponds to 166–181; it reads NMGTHKYTTHPEAQWR. The chain crosses the membrane as a helical span at residues 182-202; the sequence is VPIGINLLWGILMFFGMLFLP. Topologically, residues 203–268 are cytoplasmic; that stretch reads ESPRYLAVKG…IFSNEIRYRT (66 aa). Residues 269–287 traverse the membrane as a helical segment; that stretch reads LLGMGVMAFQQLTGNNYFF. The Extracellular portion of the chain corresponds to 288–303; sequence YYGTQVFRGTGLNSPF. A helical transmembrane segment spans residues 304-324; it reads LAALILDAVNFGCTFGAIFVL. The Cytoplasmic segment spans residues 325–330; the sequence is EYFGRR. A helical transmembrane segment spans residues 331 to 351; the sequence is GPLIVGGVWQSICFFIYASVG. At 352–365 the chain is on the extracellular side; sequence DRALTRPNGTSNHR. A glycan (N-linked (GlcNAc...) asparagine) is linked at asparagine 359. A helical transmembrane segment spans residues 366-386; sequence AGAVMIVFSCLFIFSFAQTWA. Residues 387–406 are Cytoplasmic-facing; the sequence is PAAYVIVGESYPIRYRSKCA. The chain crosses the membrane as a helical span at residues 407 to 427; the sequence is AVATASNWFWNFMISFFTPFI. Residues 428–434 lie on the Extracellular side of the membrane; that stretch reads SNSIGFK. The chain crosses the membrane as a helical span at residues 435–455; it reads YGYVFAACNLCAAIIIFLFAK. The Cytoplasmic portion of the chain corresponds to 456 to 535; sequence ETKGLTLEEI…PQQVTNPVGL (80 aa). A compositionally biased stretch (basic and acidic residues) spans 484 to 508; that stretch reads DREDIKQSDSEKERGPTSKLHEYVE. The disordered stretch occupies residues 484 to 535; it reads DREDIKQSDSEKERGPTSKLHEYVEHAPNSYASTHSTESENYPQQVTNPVGL. Polar residues predominate over residues 513-535; it reads SYASTHSTESENYPQQVTNPVGL.

Belongs to the major facilitator superfamily. Sugar transporter (TC 2.A.1.1) family.

It localises to the membrane. In terms of biological role, high-affinity fructose transporter. In Schizosaccharomyces pombe (strain 972 / ATCC 24843) (Fission yeast), this protein is High-affinity fructose transporter ght6 (ght6).